The chain runs to 333 residues: MNQTLIQEILEVVEQAAIASAKLTGLGQKDEADAAAVEAMRLRMGKIEMKGKIVIGEGERDEAPMLYIGEEVGSGNGPGVDFAVDPCEGTNLCANNQRGSMAVLAASDTGGLFNAPDFYMNKLAAPPAAKGKVDIRNSATENLKILSDCLGLSIDELTVVVMDRTRHKDLIKEIRGCGAKVQPISDGDVQAAIACGFAGTGTHCLMGIGAAPEGVISAAAMRALGGHFQGQLVYDPAIAQTSEWADYTKEGNIKRLNEMGITDIDKIYEANELASGENVVFAGSGITDGLLFDGVKFERDCVRTSSLVISTLDSTARFTNTVHIKDGAKSISL.

Residues D33, E57, D85, and E88 each contribute to the Mn(2+) site. Residues 88 to 90 (EGT), Y119, 164 to 166 (RTR), and 186 to 188 (DGD) each bind substrate. E213 contributes to the Mn(2+) binding site.

The protein belongs to the FBPase class 2 family. In terms of assembly, homotetramer. Mn(2+) serves as cofactor.

It catalyses the reaction beta-D-fructose 1,6-bisphosphate + H2O = beta-D-fructose 6-phosphate + phosphate. It carries out the reaction D-sedoheptulose 1,7-bisphosphate + H2O = D-sedoheptulose 7-phosphate + phosphate. It participates in carbohydrate biosynthesis; Calvin cycle. Its function is as follows. Catalyzes the hydrolysis of fructose 1,6-bisphosphate (Fru 1,6-P2) and sedoheptulose 1,7-bisphosphate (Sed 1,7-P2) to fructose 6-phosphate and sedoheptulose 7-phosphate, respectively. In Prochlorococcus marinus (strain MIT 9301), this protein is D-fructose 1,6-bisphosphatase class 2/sedoheptulose 1,7-bisphosphatase.